A 426-amino-acid polypeptide reads, in one-letter code: Enolase (426 aa).

Q165 serves as a coordination point for (2R)-2-phosphoglycerate. E209 functions as the Proton donor in the catalytic mechanism. 3 residues coordinate Mg(2+): D244, E287, and D313. The (2R)-2-phosphoglycerate site is built by K338, R367, S368, and K389. The active-site Proton acceptor is the K338.

This sequence belongs to the enolase family. Mg(2+) is required as a cofactor.

The protein resides in the cytoplasm. It localises to the secreted. The protein localises to the cell surface. It carries out the reaction (2R)-2-phosphoglycerate = phosphoenolpyruvate + H2O. It functions in the pathway carbohydrate degradation; glycolysis; pyruvate from D-glyceraldehyde 3-phosphate: step 4/5. Functionally, catalyzes the reversible conversion of 2-phosphoglycerate (2-PG) into phosphoenolpyruvate (PEP). It is essential for the degradation of carbohydrates via glycolysis. The polypeptide is Enolase (Methanococcus maripaludis (strain C5 / ATCC BAA-1333)).